Consider the following 304-residue polypeptide: Acetylglutamate kinase (304 aa).

Substrate-binding positions include 69-70 (GG), R91, and N202.

It belongs to the acetylglutamate kinase family. ArgB subfamily.

It is found in the cytoplasm. The enzyme catalyses N-acetyl-L-glutamate + ATP = N-acetyl-L-glutamyl 5-phosphate + ADP. The protein operates within amino-acid biosynthesis; L-arginine biosynthesis; N(2)-acetyl-L-ornithine from L-glutamate: step 2/4. Functionally, catalyzes the ATP-dependent phosphorylation of N-acetyl-L-glutamate. The chain is Acetylglutamate kinase from Caulobacter vibrioides (strain ATCC 19089 / CIP 103742 / CB 15) (Caulobacter crescentus).